We begin with the raw amino-acid sequence, 369 residues long: Type 2 DNA topoisomerase 6 subunit A (369 aa).

A Topo IIA-type catalytic domain is found at 11–149 (KGDALAREKL…FHMRPEEDGA (139 aa)). Tyr106 serves as the catalytic O-(5'-phospho-DNA)-tyrosine intermediate. The Mg(2+) site is built by Glu202 and Asp254.

Belongs to the TOP6A family. Homodimer. Heterotetramer of two Top6A and two Top6B chains. The cofactor is Mg(2+).

The enzyme catalyses ATP-dependent breakage, passage and rejoining of double-stranded DNA.. Relaxes both positive and negative superturns and exhibits a strong decatenase activity. The sequence is that of Type 2 DNA topoisomerase 6 subunit A from Methanosarcina mazei (strain ATCC BAA-159 / DSM 3647 / Goe1 / Go1 / JCM 11833 / OCM 88) (Methanosarcina frisia).